Reading from the N-terminus, the 390-residue chain is LIM/homeobox protein Lhx4 (390 aa).

LIM zinc-binding domains are found at residues 28 to 87 (PQCA…RFGT) and 88 to 150 (KCTA…AKQN). A DNA-binding region (homeobox) is located at residues 157–216 (AKRPRTTITAKQLETLKNAYKNSPKPARHVREQLSSETGLDMRVVQVWFQNRRAKEKRLK). The interaction with DNA stretch occupies residues 161 to 181 (RTTITAKQLETLKNAYKNSPK). The interval 199–211 (RVVQVWFQNRRAK) is interaction with 5-mCpG DNA. Disordered stretches follow at residues 231 to 253 (VKRSRGGSKQEKESSAEDCGVSD) and 355 to 390 (MAGGPTSDLSTGSSVGYPDFPTSPASWLDEMDHPPF).

In terms of tissue distribution, transient expression in ventrolateral regions of the developing neural tube and hindbrain.

Its subcellular location is the nucleus. In terms of biological role, may play a critical role in the development of respiratory control mechanisms and in the normal growth and maturation of the lung. Binds preferentially to methylated DNA. The sequence is that of LIM/homeobox protein Lhx4 (Lhx4) from Mus musculus (Mouse).